Here is a 93-residue protein sequence, read N- to C-terminus: Alpha-conotoxin RVIIIA (93 aa).

Residues Met-1–Ser-20 form the signal peptide. Residues Gln-21–Arg-46 constitute a propeptide that is removed on maturation. 2 positions are modified to 4-carboxyglutamate: Glu-63 and Glu-68.

In terms of processing, contains 5 disulfide bonds. In terms of tissue distribution, expressed by the venom duct.

Its subcellular location is the secreted. Its function is as follows. Alpha-conotoxins act on postsynaptic membranes, they bind to the nicotinic acetylcholine receptors (nAChR) and thus inhibit them. This toxin provokes a nearly complete and slowly reversible inhibition of both the human adult (alpha-1-beta-1-epsilon-delta (CHRNA1-CHRNB1-CHRND-CHRNE)) and human fetal (alpha-1-beta-1-gamma-delta (CHRNA1-CHRNB1-CHRNG-CHRND)) neuromuscular nAChRs. It also reversibly blocks the neuromuscular alpha-7/CHRNA7 nAChR, the alpha-3-beta-2 (CHRNA3-CHRNB2) nAChR, the chimeric alpha-6 or -3/beta-3 or -2 (CHRNA6/CHRNA3-CHRNB2-CHRNB3) nAChR and with a low potency the alpha-4-beta-2 (CHRNA4-CHRNB2) nAChR. In addition, the toxin also inhibits the alpha-9-alpha-10 (CHRNA9-CHRNA10) nAChR with a high potency (IC(50)=187 nM). The protein is Alpha-conotoxin RVIIIA of Conus radiatus (Rayed cone).